We begin with the raw amino-acid sequence, 156 residues long: Ribosomally synthesized cyclic peptide victorin precursosr vicA1 (156 aa).

Positions 1 to 21 are cleaved as a signal peptide; it reads MVRITALMSGSILLFALQALA. 7 propeptides span residues 22–36, 43–55, 62–74, 81–93, 100–112, 119–131, and 138–150; these read MPVETTSVEPAAEKR and KRGEEVEPAEEKR.

Post-translationally, vicA1 is processed by several endopeptidases including kexin proteases as well as the cluster-specific peptidases vicP1 and vicP2 to produce 7 identical copies of the hexapeptide Gly-Leu-Lys-Leu-Ala-Phe, that are further modified to yield victorins. After being excised from the precursor peptide, the core peptides are cyclized and modified post-translationally by enzymes encoded within the gene cluster. The ustYa family protein vicYb is required for the formation of the macrocycle in victorin and the copper amine oxidases (CAOs) vicK1 and vicK2 are responsible for converting victorin to the active form by oxidizing the N-terminal glycyl residue in the peptides to glyoxylate. Relaxed substrate specificity of enzymes in the victorin biosynthetic pathway results in a metabolic grid that produces a set of analogs including victorinines B, C, E or HV-toxin M.

Its pathway is mycotoxin biosynthesis. Its function is as follows. Ribosomally synthesized cyclic peptide victorin precursor, part of the gene cluster that mediates the biosynthesis of the secondary metabolite victorin, the molecular basis for Victoria blight of oats. The vicA1 translated product contains a 7-fold repeated peptide embedding the hexapeptide Gly-Leu-Lys-Leu-Ala-Phe, that is converted into the cyclic victorin. In Bipolaris victoriae (strain FI3) (Victoria blight of oats agent), this protein is Ribosomally synthesized cyclic peptide victorin precursosr vicA1.